A 609-amino-acid polypeptide reads, in one-letter code: UvrABC system protein C (609 aa).

One can recognise a GIY-YIG domain in the interval 16–94 (HLPGVYRHLD…IKSLRPRYNI (79 aa)). Residues 203–238 (REVMDEIEARMLQASTELRFEEAAVLRDQMGSLSKV) form the UVR domain.

This sequence belongs to the UvrC family. As to quaternary structure, interacts with UvrB in an incision complex.

It is found in the cytoplasm. Its function is as follows. The UvrABC repair system catalyzes the recognition and processing of DNA lesions. UvrC both incises the 5' and 3' sides of the lesion. The N-terminal half is responsible for the 3' incision and the C-terminal half is responsible for the 5' incision. The polypeptide is UvrABC system protein C (Bordetella bronchiseptica (strain ATCC BAA-588 / NCTC 13252 / RB50) (Alcaligenes bronchisepticus)).